Reading from the N-terminus, the 2210-residue chain is MAPVVSRDQCKPKTPKPHRPAPPHRCTTRCPEDCGWYVGRCSCPNVCQREGWDDFFVADKVKPPSYVASKTSVADVVDWLLEEDPATDGPSEFDLTQFFQAYTDKSHQIHRDYAPDQLAQALDMAYILSVDPPDIKLPEYEATRFTHDTSYKGKLPKWLRVYGIKSRELAKKAVTNIRGGAHWAKGLFKQMWDSLPGWSEVEAYFKAFFAGIITGVEDALSKSPSSVWTSLKLTPLLYIWRNINECSDIAVILGAFWATLELYNIPSKVYDLVSTALGPMVQELARKVINVVKGDGSGPKQEGGRPSFSIPGVLLATFLSAIILGSMPSDGLIKKILRGCATAAGLVGGFNAVKSIITTVQGASACKDVKKLASQLMCVTTMAATVSTRGERQVLASMLNDLNESVRERLVDPAYASLVPQLSAMSNKIVELSTMNASALSAARKRTPAKIIVLCGPPGHGKSVAAHKLAKMLNPNEPSIWNPFSDHHDEYTAEEVMVIDETPAEPGQWIEDLIAMGSNSPFVPNYDRVENKTRCFDSKYVIITTNHNPLINPTHTRAAALARRLTLVYVNSPDVADFLRQHPGVPPPATLFKADCSHLHFDIHPYNSIGTTAIVGHNGTTPVPRAKRVSLEGLCKHVKEMPDREGPPDGVPERMVLVAPDKGTARFVEAVINTYHNSGLVAQPAAWDTTPQPYQLAVTWQGSNSTVTGQRWDCNPQTPFVAPHFTRNMFKRVLGTEVPEYHLLAYACRITSSSLGDKSLPVPNPTVVINDPSPTRLALALMRHLKNPIASGLRVVWDLFRGCATGPKRLFTWALSQEWNPMPVTTAFTFPAGTVILHTAGGVRVVVLPPGPQFGLTEVARLADHSGQDDPVVPDMFGATWTELLWRLLKVIGTFLANYGVAIAGLTLSIAAFKTANKSAKNDRQGWLSGSGVALSDEEYDEWMKYSKKKGKKINADEFLQLRHRAAMGNDDDDARDYRSFYTAYQLGREGNNCDDIPLHPAVGPTTGGGYYVHIGNGVGVTLKHVASGEDVIKELGNDLVKIRTKHHKVGDPAMVVGDGMPVKFVTGHLVVDTRSESVVFDQTRLNVIRVKVPGLETRRGYCGLPYVNSAGQVVGLHQGSYGVGDKVITPITPEPTAPPDTIMWRGLECARSDIVTHLPHGTKYSVSPGMKEEATKCSHQPAPLGRNDPRCGQTQVAMVVKALSPYTGSPAVEKLDGCLVAAISEVRTAIQSLTPKGGFRPLTFAAAWQSLDLSTSAGALAPGKTKRDLCDPDTGMPTGKYKEELLRAWSRAGTGTALDHTYIVALKDELRPVEKVAEGKRRLIWGADARVALIASAALSPIANALKTVTNLLPVQVGVDPSSASCVSAWVNRLNRHDHCLELDYSKWDSTMSPVLINIAIDILCNTCASDGLRVAVCQTLKTRPTALVEGVAVPTKSGLPSGMPFTSQINSIVHWILWSATVRKCSLPLNIGSVNELAPFLTYGDDGLYTIPSHLTKSIDEIVSTLKGYGLSPTAPDKGMNIEIKKTSFTYMSGPVFLKRRIVLTPGGHRALLDLTSLARQPVWVNGPRRSVWDHEAQPIEIDSEVRTIQLQNVLIESAWHQPQDFNQVAALVYKSAEASGITIPRYSLEEARAIYDGRFYGIQHVSMPCNSDLIREGNMSDNKSIPEQQHESSRAMDAGATGAAAAAPAPPVAAAPASGLVGALVAEPQSGPSTEQWRTAYTLFGTVSWNANAGPGTILTVGRLGPGMNPYTQHIAAMYGGWAGGMDIRITIAGSGFIGGTLAVAAIPPGVDPESVNVLRMPHVLIDARGGVPLEVTLEDIRTSLYHPMGDANTASLVIAVMTGLINPLGTDTLSVTVQLETRPGRDWVFFSLLPPTAGVASADPSQLLTRVALATSPEVRFGTGVLGILGLPSNPSVNRVYDVQSRTRGWSFPIPSSSVFMGDARNVEHTRRVMVQSSAPNNPLSDVFPDGFPDFIPQSDTEPDGGAVIAGQVLPHPGDNDNFWRLTPVVRGNTTAAINTIPERFNQVYFINLADEEAVSAATEELRFNGIQGIFGQRTTARAVQVMQGYVPRAEHIIRPAGFAGVGPQGPNVPIGFAGTMPNFNATASGADDLVPVWGPTLVHTASLLAGTTYELAENSMYVFSVSTSTSTFELGMLANGTWLGPAQLAGTGITWTEVLSVTYMGMRFAYNPLSGQGIGGESRRL.

Residues 1–24 are disordered; the sequence is MAPVVSRDQCKPKTPKPHRPAPPH. Basic residues predominate over residues 13–22; sequence KTPKPHRPAP. Residues 426–585 form the SF3 helicase domain; the sequence is SNKIVELSTM…ADFLRQHPGV (160 aa). 456-463 is a binding site for ATP; that stretch reads GPPGHGKS. Tyr-940 is subject to O-(5'-phospho-RNA)-tyrosine. In terms of domain architecture, Peptidase C24 spans 991-1136; sequence GNNCDDIPLH…KVITPITPEP (146 aa). Active-site for 3CLpro activity residues include His-1025, Asp-1039, and Cys-1103. The 123-residue stretch at 1379–1501 folds into the RdRp catalytic domain; that stretch reads DHCLELDYSK…TIPSHLTKSI (123 aa). The interval 1656-1685 is disordered; the sequence is LIREGNMSDNKSIPEQQHESSRAMDAGATG.

Post-translationally, specific enzymatic cleavages by its own cysteine protease yield mature proteins. The protease cleaves itself from the nascent polyprotein autocatalytically. Precursor p41 can be cleaved by viral 3CLpro into protein p19 and VPg, or cleaved by host protease into protein p23/2 and protein p18. In terms of processing, VPg is uridylylated by the polymerase and is covalently attached to the 5'-end of the polyadenylated genomic and subgenomic RNAs. This uridylylated form acts as a nucleotide-peptide primer for the polymerase.

The protein localises to the virion. It is found in the host cytoplasm. It catalyses the reaction a ribonucleoside 5'-triphosphate + H2O = a ribonucleoside 5'-diphosphate + phosphate + H(+). It carries out the reaction Endopeptidase with a preference for cleavage when the P1 position is occupied by Glu-|-Xaa and the P1' position is occupied by Gly-|-Yaa.. The catalysed reaction is RNA(n) + a ribonucleoside 5'-triphosphate = RNA(n+1) + diphosphate. Functionally, displays NTPase activity, but no helicase activity. Induces the formation of convoluted membranes derived from the host ER. These remodeled membranes probably form the viral factories that contain the replication complex. Together with NS2 and NS4, initiates the formation of the replication complex. Viral genome-linked protein is covalently linked to the 5'-end of the positive-strand, negative-strand genomic RNAs and subgenomic RNA. Acts as a genome-linked replication primer. May recruit ribosome to viral RNA thereby promoting viral proteins translation. Interacts with host translation initiation complex to allow the translation of viral proteins. Its function is as follows. Processes the polyprotein. 3CLpro-RdRp is first released by autocleavage, then all other proteins are cleaved. May cleave polyadenylate-binding protein thereby inhibiting cellular translation. In terms of biological role, replicates genomic and antigenomic RNA by recognizing replications specific signals. Also transcribes a subgenomic mRNA by initiating RNA synthesis internally on antigenomic RNA. This sgRNA codes for structural proteins. Catalyzes the covalent attachment VPg with viral RNAs. Functionally, capsid protein self assembles to form an icosahedral capsid with a T=3 symmetry, about 35 nm in diameter, and consisting of 180 capsid proteins. A smaller form of capsid with a diameter of 23 nm might be capsid proteins assembled as icosahedron with T=1 symmetry. The capsid encapsulate VP2 proteins and genomic or subgenomic RNA. Attaches virion to target cells by binding histo-blood group antigens, inducing endocytosis of the viral particle. Acidification of the endosome induces conformational change of capsid protein thereby injecting virus genomic RNA into host cytoplasm. In Bovine enteric calicivirus NB (isolate Bovine/United States/N ebraska/1980) (BEC-NB), this protein is Genome polyprotein.